A 219-amino-acid chain; its full sequence is Large ribosomal subunit protein bL25 (219 aa).

Residues valine 193 to glutamate 219 form a disordered region. Positions valine 209 to glutamate 219 are enriched in polar residues.

The protein belongs to the bacterial ribosomal protein bL25 family. CTC subfamily. In terms of assembly, part of the 50S ribosomal subunit; part of the 5S rRNA/L5/L18/L25 subcomplex. Contacts the 5S rRNA. Binds to the 5S rRNA independently of L5 and L18.

Its function is as follows. This is one of the proteins that binds to the 5S RNA in the ribosome where it forms part of the central protuberance. The sequence is that of Large ribosomal subunit protein bL25 from Legionella pneumophila (strain Corby).